The chain runs to 218 residues: GTP cyclohydrolase 1 (218 aa).

C109, H112, and C180 together coordinate Zn(2+).

This sequence belongs to the GTP cyclohydrolase I family. In terms of assembly, toroid-shaped homodecamer, composed of two pentamers of five dimers.

The enzyme catalyses GTP + H2O = 7,8-dihydroneopterin 3'-triphosphate + formate + H(+). It participates in cofactor biosynthesis; 7,8-dihydroneopterin triphosphate biosynthesis; 7,8-dihydroneopterin triphosphate from GTP: step 1/1. This is GTP cyclohydrolase 1 from Aeromonas hydrophila subsp. hydrophila (strain ATCC 7966 / DSM 30187 / BCRC 13018 / CCUG 14551 / JCM 1027 / KCTC 2358 / NCIMB 9240 / NCTC 8049).